The sequence spans 418 residues: Aminodeoxyfutalosine deaminase (418 aa).

2 residues coordinate Zn(2+): His97 and His99. Substrate-binding residues include Glu173 and His211. His238 is a binding site for Zn(2+). The active-site Proton donor is Glu241. Residue Asp352 coordinates Zn(2+).

It belongs to the metallo-dependent hydrolases superfamily. Zn(2+) is required as a cofactor.

It catalyses the reaction 6-amino-6-deoxyfutalosine + H2O + H(+) = futalosine + NH4(+). Its pathway is quinol/quinone metabolism; menaquinone biosynthesis. In terms of biological role, catalyzes the deamination of aminodeoxyfutalosine (AFL) into futalosine (FL). To a lesser extent, can also deaminate 5'-deoxyadenosine, 5'-methylthioadenosine, 2'-deoxyadenosine, adenosine, 1-(6-amino-9H-purin-9-yl)-1-deoxy-N-ethyl-beta-D-ribofuranuronamide (NECA), and S-adenosylhomocysteine. This chain is Aminodeoxyfutalosine deaminase, found in Deinococcus radiodurans (strain ATCC 13939 / DSM 20539 / JCM 16871 / CCUG 27074 / LMG 4051 / NBRC 15346 / NCIMB 9279 / VKM B-1422 / R1).